A 911-amino-acid chain; its full sequence is Protein argonaute 4B (911 aa).

Disordered stretches follow at residues 1-51 and 149-171; these read MDAH…RPGL and KTAANGSPGGNDSPGGSDRKRVR. The 116-residue stretch at 281 to 396 folds into the PAZ domain; the sequence is PVIDFLLANQ…FPIELCSLIP (116 aa). A Piwi domain is found at 565–872; the sequence is FLLCLLPERK…AAAQVGTFLK (308 aa).

It belongs to the argonaute family. Ago subfamily.

Probably involved in the RNA silencing pathway. May bind to short RNAs such as microRNAs (miRNAs) or short interfering RNAs (siRNAs), and represses the translation of mRNAs which are complementary to them. This is Protein argonaute 4B (AGO4B) from Oryza sativa subsp. japonica (Rice).